The sequence spans 283 residues: Elongation factor Ts (283 aa).

Positions threonine 80–valine 83 are involved in Mg(2+) ion dislocation from EF-Tu.

The protein belongs to the EF-Ts family.

The protein resides in the cytoplasm. Associates with the EF-Tu.GDP complex and induces the exchange of GDP to GTP. It remains bound to the aminoacyl-tRNA.EF-Tu.GTP complex up to the GTP hydrolysis stage on the ribosome. The chain is Elongation factor Ts from Haemophilus influenzae (strain PittGG).